The primary structure comprises 397 residues: L-asparaginase-like protein CG4372 (397 aa).

The N-terminal stretch at 1–22 (MLAQSCCLRLLILLLLFTTIGS) is a signal peptide. 3 disulfides stabilise this stretch: C90/C95, C189/C205, and C344/C371.

Belongs to the Ntn-hydrolase family.

In Drosophila melanogaster (Fruit fly), this protein is L-asparaginase-like protein CG4372.